Reading from the N-terminus, the 310-residue chain is uncharacterized protein (310 aa).

A run of 9 helical transmembrane segments spans residues 1-21 (MIYF…MFSK), 38-58 (FFFY…VVYT), 74-94 (TSYF…FFIF), 110-130 (YGLW…SFLF), 135-155 (WILY…IFFS), 194-214 (IFIT…IVFS), 228-248 (LFII…MYLF), 256-276 (FPIM…KILI), and 284-304 (IFLT…INLI).

It belongs to the TerC family.

The protein localises to the cell membrane. This is an uncharacterized protein from Buchnera aphidicola subsp. Schizaphis graminum (strain Sg).